The chain runs to 107 residues: DNA polymerase delta subunit 4 (107 aa).

The short motif at 1 to 16 (MGRKRFITDSYPVVKK) is the PCNA-interaction protein motif (PIP box) element. The tract at residues 1–40 (MGRKRFITDSYPVVKKREGPPGHSKGELAPELGEDTQSLS) is disordered. Over residues 15 to 28 (KKREGPPGHSKGEL) the composition is skewed to basic and acidic residues.

Belongs to the DNA polymerase delta subunit 4 family. Component of the tetrameric DNA polymerase delta complex (Pol-delta4), which consists of POLD1/p125, POLD2/p50, POLD3/p66/p68 and POLD4/p12, with POLD1 bearing DNA polymerase and 3' to 5' proofreading exonuclease activities. Within this complex, directly interacts with POLD1 and POLD2. Directly interacts with PCNA, as do POLD1 and POLD3; this interaction stimulates Pol-delta4 polymerase activity. As POLD1 and POLD2, directly interacts with WRNIP1; this interaction stimulates DNA polymerase delta-mediated DNA synthesis, independently of the presence of PCNA, possibly by increasing initiation frequency. Upon genotoxic stress induced by DNA damaging agents or by replication stress, POLD4 is proteolytically degraded and Pol-delta4 is converted into a trimeric form of the complex (Pol-delta3) that has an increased proofreading activity. The DNA polymerase delta complex interacts with POLDIP2; this interaction is probably mediated through direct binding to POLD2. In terms of processing, ubiquitinated; undergoes 'Lys-48'-linked polyubiquitination in response to UV irradiation or treatment with an alkylating agent, leading to proteasomal degradation. This modification is mediated, at least in part, by RNF8. Ubiquitinated; undergoes 'Lys-48'-linked ubiquitination in response to UV irradiation, leading to proteasomal degradation. This modification is partly mediated by RNF8 and by the DCX(DTL) E3 ubiquitin ligase complex (also called CRL4(CDT2)). Efficient degradation requires the presence of PCNA and is required for the inhibition of fork progression after DNA damage.

The protein resides in the nucleus. Its function is as follows. As a component of the tetrameric DNA polymerase delta complex (Pol-delta4), plays a role in high fidelity genome replication and repair. Within this complex, increases the rate of DNA synthesis and decreases fidelity by regulating POLD1 polymerase and proofreading 3' to 5' exonuclease activity. Pol-delta4 participates in Okazaki fragment processing, through both the short flap pathway, as well as a nick translation system. Under conditions of DNA replication stress, required for the repair of broken replication forks through break-induced replication (BIR), a mechanism that may induce segmental genomic duplications of up to 200 kb. Involved in Pol-delta4 translesion synthesis (TLS) of templates carrying O6-methylguanine or abasic sites. Its degradation in response to DNA damage is required for the inhibition of fork progression and cell survival. The polypeptide is DNA polymerase delta subunit 4 (Pold4) (Mus musculus (Mouse)).